A 469-amino-acid polypeptide reads, in one-letter code: 3-isopropylmalate dehydratase large subunit (469 aa).

The [4Fe-4S] cluster site is built by Cys-347, Cys-410, and Cys-413.

This sequence belongs to the aconitase/IPM isomerase family. LeuC type 1 subfamily. In terms of assembly, heterodimer of LeuC and LeuD. It depends on [4Fe-4S] cluster as a cofactor.

The catalysed reaction is (2R,3S)-3-isopropylmalate = (2S)-2-isopropylmalate. Its pathway is amino-acid biosynthesis; L-leucine biosynthesis; L-leucine from 3-methyl-2-oxobutanoate: step 2/4. Catalyzes the isomerization between 2-isopropylmalate and 3-isopropylmalate, via the formation of 2-isopropylmaleate. This Burkholderia orbicola (strain MC0-3) protein is 3-isopropylmalate dehydratase large subunit.